We begin with the raw amino-acid sequence, 155 residues long: 6,7-dimethyl-8-ribityllumazine synthase (155 aa).

5-amino-6-(D-ribitylamino)uracil is bound by residues phenylalanine 24, 58 to 60, and 82 to 84; these read AFE and VLI. A (2S)-2-hydroxy-3-oxobutyl phosphate-binding site is contributed by 87-88; that stretch reads AT. Histidine 90 serves as the catalytic Proton donor. Phenylalanine 115 contacts 5-amino-6-(D-ribitylamino)uracil. Residue arginine 129 coordinates (2S)-2-hydroxy-3-oxobutyl phosphate.

Belongs to the DMRL synthase family.

It carries out the reaction (2S)-2-hydroxy-3-oxobutyl phosphate + 5-amino-6-(D-ribitylamino)uracil = 6,7-dimethyl-8-(1-D-ribityl)lumazine + phosphate + 2 H2O + H(+). Its pathway is cofactor biosynthesis; riboflavin biosynthesis; riboflavin from 2-hydroxy-3-oxobutyl phosphate and 5-amino-6-(D-ribitylamino)uracil: step 1/2. Catalyzes the formation of 6,7-dimethyl-8-ribityllumazine by condensation of 5-amino-6-(D-ribitylamino)uracil with 3,4-dihydroxy-2-butanone 4-phosphate. This is the penultimate step in the biosynthesis of riboflavin. The sequence is that of 6,7-dimethyl-8-ribityllumazine synthase from Chloroherpeton thalassium (strain ATCC 35110 / GB-78).